A 627-amino-acid chain; its full sequence is Putative polyketide hydroxylase (627 aa).

FAD is bound by residues 22 to 51 (PVLV…LVER) and 309 to 319 (YRSGRVLLAGD). The interval 370–469 (AEATSARAAH…GGGPGGGGPQ (100 aa)) is disordered. The span at 395-469 (AGGGGPGAGT…GGGPGGGGPQ (75 aa)) shows a compositional bias: gly residues.

Belongs to the PheA/TfdB FAD monooxygenase family. It depends on FAD as a cofactor.

Involved in developmentally regulated synthesis of a compound biosynthetically related to polyketide antibiotics which is essential for spore color in Streptococcus coelicolor. In Streptomyces coelicolor (strain ATCC BAA-471 / A3(2) / M145), this protein is Putative polyketide hydroxylase.